Consider the following 361-residue polypeptide: Phospho-N-acetylmuramoyl-pentapeptide-transferase (361 aa).

The next 10 membrane-spanning stretches (helical) occupy residues 25–45, 73–93, 98–118, 139–159, 168–188, 200–220, 237–257, 264–284, 289–309, and 339–359; these read RGILAALTALFLSLWMGPAVI, TMGGSLILLTVTLSVLLWGDL, VWLVLAVMICFGAIGWYDDWI, IFGLAAGLFLYYTADVPAAIT, IALPLAGVSFVVIAYFWIVGF, GLAIMPTVLVACALGVFAYAS, AGELIIICSAIAGAGLGFLWF, VFMGDIGALSLGAVLGTIAVI, MVLVIMGGVFVIETLSVIIQV, and VIVRFWIISVVLVLIGLATLK.

The protein belongs to the glycosyltransferase 4 family. MraY subfamily. Mg(2+) serves as cofactor.

Its subcellular location is the cell inner membrane. It catalyses the reaction UDP-N-acetyl-alpha-D-muramoyl-L-alanyl-gamma-D-glutamyl-meso-2,6-diaminopimeloyl-D-alanyl-D-alanine + di-trans,octa-cis-undecaprenyl phosphate = di-trans,octa-cis-undecaprenyl diphospho-N-acetyl-alpha-D-muramoyl-L-alanyl-D-glutamyl-meso-2,6-diaminopimeloyl-D-alanyl-D-alanine + UMP. Its pathway is cell wall biogenesis; peptidoglycan biosynthesis. Functionally, catalyzes the initial step of the lipid cycle reactions in the biosynthesis of the cell wall peptidoglycan: transfers peptidoglycan precursor phospho-MurNAc-pentapeptide from UDP-MurNAc-pentapeptide onto the lipid carrier undecaprenyl phosphate, yielding undecaprenyl-pyrophosphoryl-MurNAc-pentapeptide, known as lipid I. The polypeptide is Phospho-N-acetylmuramoyl-pentapeptide-transferase (Xanthomonas oryzae pv. oryzae (strain PXO99A)).